The sequence spans 271 residues: Mannosyl-3-phosphoglycerate phosphatase (271 aa).

Aspartate 13 (nucleophile) is an active-site residue. Aspartate 13, aspartate 15, and aspartate 214 together coordinate Mg(2+).

The protein belongs to the HAD-like hydrolase superfamily. MPGP family. Requires Mg(2+) as cofactor.

Its subcellular location is the cytoplasm. It carries out the reaction 2-O-(alpha-D-mannosyl)-3-phosphoglycerate + H2O = (2R)-2-O-(alpha-D-mannosyl)-glycerate + phosphate. In Escherichia coli O17:K52:H18 (strain UMN026 / ExPEC), this protein is Mannosyl-3-phosphoglycerate phosphatase.